A 162-amino-acid polypeptide reads, in one-letter code: uncharacterized protein (162 aa).

It is found in the cytoplasm. The protein resides in the nucleus. This is an uncharacterized protein from Schizosaccharomyces pombe (strain 972 / ATCC 24843) (Fission yeast).